The sequence spans 346 residues: tRNA N6-adenosine threonylcarbamoyltransferase (346 aa).

Fe cation is bound by residues His-111 and His-115. Substrate-binding positions include 134-138 (LVSGG), Asp-167, Gly-180, and Asn-279. Position 307 (Asp-307) interacts with Fe cation.

Belongs to the KAE1 / TsaD family. Fe(2+) is required as a cofactor.

It localises to the cytoplasm. The catalysed reaction is L-threonylcarbamoyladenylate + adenosine(37) in tRNA = N(6)-L-threonylcarbamoyladenosine(37) in tRNA + AMP + H(+). Its function is as follows. Required for the formation of a threonylcarbamoyl group on adenosine at position 37 (t(6)A37) in tRNAs that read codons beginning with adenine. Is involved in the transfer of the threonylcarbamoyl moiety of threonylcarbamoyl-AMP (TC-AMP) to the N6 group of A37, together with TsaE and TsaB. TsaD likely plays a direct catalytic role in this reaction. The chain is tRNA N6-adenosine threonylcarbamoyltransferase from Burkholderia cenocepacia (strain ATCC BAA-245 / DSM 16553 / LMG 16656 / NCTC 13227 / J2315 / CF5610) (Burkholderia cepacia (strain J2315)).